We begin with the raw amino-acid sequence, 164 residues long: Protein SprT (164 aa).

The region spanning 14 to 156 (QQAETFFKRT…LCRRCREPLV (143 aa)) is the SprT-like domain. His69 serves as a coordination point for Zn(2+). The active site involves Glu70. His73 is a Zn(2+) binding site.

It belongs to the SprT family. It depends on Zn(2+) as a cofactor.

It is found in the cytoplasm. The chain is Protein SprT from Pseudomonas savastanoi pv. phaseolicola (strain 1448A / Race 6) (Pseudomonas syringae pv. phaseolicola (strain 1448A / Race 6)).